The sequence spans 322 residues: Zinc finger C2HC domain-containing protein CBG14627 (322 aa).

2 C2HC/C3H-type zinc fingers span residues 9–38 and 119–148; these read PVYP…LATL and DYVQ…QTTR. Zn(2+) contacts are provided by Cys13, Cys16, His28, Cys32, Cys123, Cys126, His138, and Cys142. Residues 144–322 form a disordered region; it reads EQTTRKQGGK…SRNNSRSRIF (179 aa). Positions 148–168 are enriched in polar residues; it reads RKQGGKSSAGNRGLTSNNYRS. Positions 171–219 are enriched in basic and acidic residues; sequence SKHEGRKQESSSRNGSAERKTTTRGRDGSLSRARRDDSNDLTNRRKSLE. A compositionally biased stretch (polar residues) spans 220-238; it reads TRSQLTTGQANNRTTSLSA. Residues 278-294 are compositionally biased toward low complexity; the sequence is TTTTASASRSGSGSSSR. Residues 296–305 are compositionally biased toward basic and acidic residues; sequence RTRDESRESR. Positions 311–322 are enriched in low complexity; it reads SNSRNNSRSRIF.

This sequence belongs to the ZC2HC1 family. The cofactor is Zn(2+).

This is Zinc finger C2HC domain-containing protein CBG14627 from Caenorhabditis briggsae.